The chain runs to 144 residues: Cell division protein SepF (144 aa).

Positions 16–42 (DEMNEAPYTEAEQQEEEVPQAQKNERR) are disordered.

This sequence belongs to the SepF family. In terms of assembly, homodimer. Interacts with FtsZ.

The protein localises to the cytoplasm. Functionally, cell division protein that is part of the divisome complex and is recruited early to the Z-ring. Probably stimulates Z-ring formation, perhaps through the cross-linking of FtsZ protofilaments. Its function overlaps with FtsA. This Lactobacillus gasseri (strain ATCC 33323 / DSM 20243 / BCRC 14619 / CIP 102991 / JCM 1131 / KCTC 3163 / NCIMB 11718 / NCTC 13722 / AM63) protein is Cell division protein SepF.